The primary structure comprises 242 residues: Segregation and condensation protein A (242 aa).

The protein belongs to the ScpA family. In terms of assembly, component of a cohesin-like complex composed of ScpA, ScpB and the Smc homodimer, in which ScpA and ScpB bind to the head domain of Smc. The presence of the three proteins is required for the association of the complex with DNA.

It localises to the cytoplasm. Functionally, participates in chromosomal partition during cell division. May act via the formation of a condensin-like complex containing Smc and ScpB that pull DNA away from mid-cell into both cell halves. The protein is Segregation and condensation protein A of Lactococcus lactis subsp. lactis (strain IL1403) (Streptococcus lactis).